The sequence spans 117 residues: Immunoglobulin kappa variable 1D-17 (117 aa).

Residues 1–22 form the signal peptide; sequence MDMRVPAQLLGLLLLWFPGARC. Residues 23 to 45 are framework-1; the sequence is NIQMTQSPSAMSASVGDRVTITC. Residues 23–117 form the Ig-like domain; sequence NIQMTQSPSA…YYCLQHNSYP (95 aa). The cysteines at positions 45 and 110 are disulfide-linked. Positions 46–56 are complementarity-determining-1; the sequence is RARQGISNYLA. A framework-2 region spans residues 57-71; that stretch reads WFQQKPGKVPKHLIY. The interval 72 to 78 is complementarity-determining-2; that stretch reads AASSLQS. A framework-3 region spans residues 79–110; the sequence is GVPSRFSGSGSGTEFTLTISSLQPEDFATYYC. Residues 111 to 117 are complementarity-determining-3; the sequence is LQHNSYP.

Immunoglobulins are composed of two identical heavy chains and two identical light chains; disulfide-linked.

It localises to the secreted. The protein resides in the cell membrane. In terms of biological role, v region of the variable domain of immunoglobulin light chains that participates in the antigen recognition. Immunoglobulins, also known as antibodies, are membrane-bound or secreted glycoproteins produced by B lymphocytes. In the recognition phase of humoral immunity, the membrane-bound immunoglobulins serve as receptors which, upon binding of a specific antigen, trigger the clonal expansion and differentiation of B lymphocytes into immunoglobulins-secreting plasma cells. Secreted immunoglobulins mediate the effector phase of humoral immunity, which results in the elimination of bound antigens. The antigen binding site is formed by the variable domain of one heavy chain, together with that of its associated light chain. Thus, each immunoglobulin has two antigen binding sites with remarkable affinity for a particular antigen. The variable domains are assembled by a process called V-(D)-J rearrangement and can then be subjected to somatic hypermutations which, after exposure to antigen and selection, allow affinity maturation for a particular antigen. The protein is Immunoglobulin kappa variable 1D-17 of Homo sapiens (Human).